Consider the following 274-residue polypeptide: Small ribosomal subunit protein uS2 (274 aa).

It belongs to the universal ribosomal protein uS2 family.

The chain is Small ribosomal subunit protein uS2 from Syntrophobacter fumaroxidans (strain DSM 10017 / MPOB).